Consider the following 608-residue polypeptide: MCGIVGIVGTQPVAERLVDALKRLEYRGYDSAGVATIDNGAMDRRRAEGKLFNLEKLVSEKPLPGVVGIAHTRWATHGVPNEINAHPHFVDGVAVVHNGIIENFSELREELSAEGATFTTQTDTEVVAQLLAKYTREGLGHREAMLKMLNHVTGAYALVVMFQDDPGTLLSARSGPPLAVGYGRGEMFLGSDAIALSPFTNEITYLVDGDCAIVTRDGAEIIDFSGKPVKRERQISQATAFVVDKGNHRHFMEKEIYEQPEVISHALSHYVDFATRTVKDADKAIDFASLSGLAISACGTAYLSGLIGKYWFERYARLPVEIDVASEFRYREIPLVPTQAALFISQSGETADTLAALRYCQQEGLKIGAVVNTRESTMARESDAIFPILAGPEIGVASTKAFTCQLAVLASLAVAAGKARGTLKPGEEKQLVQQLIEMPRIMSKVLNVIQPQIEALSRDLSRFKDVLYLGRGTSFPLALEGALKLKEISYIHAEGYAAGELKHGPIALIDENMPVIVIAPHDRFFEKTVSNMQEVAARGGRIIFITDEKGAAASKLETMATITLPNVDELIAPMVFSLPIQLLAYHTAVFMGTDVDQPRNLAKSVTVE.

Cysteine 2 functions as the Nucleophile; for GATase activity in the catalytic mechanism. The region spanning 2–217 (CGIVGIVGTQ…DGDCAIVTRD (216 aa)) is the Glutamine amidotransferase type-2 domain. SIS domains lie at 281–422 (ADKA…ARGT) and 456–598 (LSRD…VDQP). Catalysis depends on lysine 603, which acts as the For Fru-6P isomerization activity.

Homodimer.

The protein localises to the cytoplasm. It carries out the reaction D-fructose 6-phosphate + L-glutamine = D-glucosamine 6-phosphate + L-glutamate. Catalyzes the first step in hexosamine metabolism, converting fructose-6P into glucosamine-6P using glutamine as a nitrogen source. This Agrobacterium fabrum (strain C58 / ATCC 33970) (Agrobacterium tumefaciens (strain C58)) protein is Glutamine--fructose-6-phosphate aminotransferase [isomerizing].